The chain runs to 879 residues: Interference hedgehog (879 aa).

A signal peptide spans 1–20; it reads MTLLTSSLLLFSLLTSRLEA. Residues 21–703 are Extracellular-facing; it reads IPVLEKSPAH…ETFNMSPMLT (683 aa). Ig-like C2-type domains lie at 45 to 142, 132 to 232, 252 to 340, and 346 to 432; these read PGVR…IARL, PLVV…ERIQ, PHLL…YIKV, and PQIV…LQVN. 4 disulfide bridges follow: cysteine 68–cysteine 126, cysteine 173–cysteine 220, cysteine 276–cysteine 324, and cysteine 367–cysteine 414. N-linked (GlcNAc...) asparagine glycosylation is found at asparagine 102 and asparagine 209. Residues 426–467 form a disordered region; sequence GTLLQVNPKQIQEPRESGGTHRPKPNQGSKQKQMYPPSPPNV. Fibronectin type-III domains lie at 461-567 and 575-670; these read PPSP…LQPG and VPEL…TQRP. An N-linked (GlcNAc...) asparagine glycan is attached at asparagine 466. Heparin is bound by residues arginine 497, lysine 501, lysine 503, and arginine 541. An N-linked (GlcNAc...) asparagine glycan is attached at asparagine 557. The segment at 662–698 is disordered; that stretch reads LKQGRTQRPKTSTTEEPTLQMGDRDTTTPSHNETFNM. Polar residues-rich tracts occupy residues 665–678 and 688–698; these read GRTQ…TEEP and TTPSHNETFNM. Asparagine 693 is a glycosylation site (N-linked (GlcNAc...) asparagine). The chain crosses the membrane as a helical span at residues 704–724; the sequence is GTLGGGAVLTLLLISICLCVC. The Cytoplasmic portion of the chain corresponds to 725 to 879; the sequence is RRRSSRSRGN…SSGSLNSVGV (155 aa). Residues 728–879 are disordered; it reads SSRSRGNNPN…SSGSLNSVGV (152 aa). Low complexity-rich tracts occupy residues 822–836 and 863–879; these read RAGG…NNNN and SSRS…SVGV.

The protein belongs to the immunoglobulin superfamily. IHOG family. As to quaternary structure, homodimer. Heterotetramer; 2 iHog chains bind 2 hh chains when facilitated by heparin, heparin is required to promote high-affinity interactions between hh and iHog.

It is found in the membrane. Mediates response to the active Hedgehog (Hh) protein signal in embryos, functioning upstream or at the level of patched (ptc). The protein is Interference hedgehog of Drosophila erecta (Fruit fly).